The chain runs to 118 residues: Small ribosomal subunit protein mS37 (118 aa).

A CHCH domain is found at Glu42–Arg84. 2 short sequence motifs (cx9C motif) span residues Cys45–Cys55 and Cys66–Cys76. 2 cysteine pairs are disulfide-bonded: Cys45-Cys76 and Cys55-Cys66.

This sequence belongs to the mitochondrion-specific ribosomal protein mS37 family. Component of the mitochondrial small ribosomal subunit (mt-SSU). Mature mammalian 55S mitochondrial ribosomes consist of a small (28S) and a large (39S) subunit. The 28S small subunit contains a 12S ribosomal RNA (12S mt-rRNA) and 30 different proteins. The 39S large subunit contains a 16S rRNA (16S mt-rRNA), a copy of mitochondrial valine transfer RNA (mt-tRNA(Val)), which plays an integral structural role, and 52 different proteins.

It localises to the mitochondrion. Its subcellular location is the nucleus. This is Small ribosomal subunit protein mS37 (CHCHD1) from Homo sapiens (Human).